Consider the following 164-residue polypeptide: uncharacterized protein (164 aa).

This is an uncharacterized protein from Arabidopsis thaliana (Mouse-ear cress).